Here is a 323-residue protein sequence, read N- to C-terminus: Prostaglandin-E(2) 9-reductase (323 aa).

Residues 23 to 24 and Asp50 each bind NADP(+); that span reads TY. Tyr24 is a substrate binding site. Tyr55 serves as the catalytic Proton donor. A substrate-binding site is contributed by His117. NADP(+) is bound by residues 166–167, Gln190, 216–221, and 270–280; these read SN, YSALGS, and KSFTEKRIKEN.

This sequence belongs to the aldo/keto reductase family.

Its subcellular location is the cytoplasm. It carries out the reaction prostaglandin F2alpha + NADP(+) = prostaglandin E2 + NADPH + H(+). The catalysed reaction is (17R,20S)-17,20-dihydroxypregn-4-en-3-one + NADP(+) = 17alpha-hydroxyprogesterone + NADPH + H(+). The enzyme catalyses (17R,20S)-17,20-dihydroxypregn-4-en-3-one + NAD(+) = 17alpha-hydroxyprogesterone + NADH + H(+). Its function is as follows. Can convert prostaglandin E2 to prostaglandin F2-alpha. This chain is Prostaglandin-E(2) 9-reductase (AKR1C5), found in Oryctolagus cuniculus (Rabbit).